A 149-amino-acid chain; its full sequence is D-aminoacyl-tRNA deacylase (149 aa).

The short motif at 137–138 (GP) is the Gly-cisPro motif, important for rejection of L-amino acids element.

The protein belongs to the DTD family. As to quaternary structure, homodimer.

The protein resides in the cytoplasm. The enzyme catalyses glycyl-tRNA(Ala) + H2O = tRNA(Ala) + glycine + H(+). It catalyses the reaction a D-aminoacyl-tRNA + H2O = a tRNA + a D-alpha-amino acid + H(+). In terms of biological role, an aminoacyl-tRNA editing enzyme that deacylates mischarged D-aminoacyl-tRNAs. Also deacylates mischarged glycyl-tRNA(Ala), protecting cells against glycine mischarging by AlaRS. Acts via tRNA-based rather than protein-based catalysis; rejects L-amino acids rather than detecting D-amino acids in the active site. By recycling D-aminoacyl-tRNA to D-amino acids and free tRNA molecules, this enzyme counteracts the toxicity associated with the formation of D-aminoacyl-tRNA entities in vivo and helps enforce protein L-homochirality. The sequence is that of D-aminoacyl-tRNA deacylase from Desulfitobacterium hafniense (strain DSM 10664 / DCB-2).